The following is a 930-amino-acid chain: GPI ethanolamine phosphate transferase 1 (930 aa).

Residues 1 to 8 (MARLGRTG) lie on the Cytoplasmic side of the membrane. The helical transmembrane segment at 9–29 (FLTLAVVFHLIYAYSIFDIYF) threads the bilayer. The Lumenal portion of the chain corresponds to 30–466 (VSPIVSGMRP…LQTYDWLFLR (437 aa)). N-linked (GlcNAc...) asparagine glycosylation is present at Asn-148. The chain crosses the membrane as a helical span at residues 467-487 (TIVTFGYVGWIAYALTTVIHL). At 488-498 (HVLHGASESDR) the chain is on the cytoplasmic side. A helical membrane pass occupies residues 499 to 519 (TTASISFFSSVLVALFSVFLY). Residues 520-521 (QG) are Lumenal-facing. The chain crosses the membrane as a helical span at residues 522 to 542 (SPWRYYLYGFFPIFFWEEVFA). The Cytoplasmic portion of the chain corresponds to 543-569 (RRKAFHAGRAGALLLPKRDLHSNKVED). Residues 570–590 (IDTITYGGAFMLLTGLLYLLF) form a helical membrane-spanning segment. The Lumenal segment spans residues 591–611 (EDEILGTSHQPAAVSRKGSRN). Residues 612–632 (IMGLQLGMVLLALIVTRSSAA) traverse the membrane as a helical segment. Residues 633-639 (SLQAKQG) are Cytoplasmic-facing. Residues 640–660 (LPFGNQVVGWGVLIASLLLPF) traverse the membrane as a helical segment. At 661-684 (AHRLYPNSHYLHRLMIIFLTFSPT) the chain is on the lumenal side. Residues 685 to 705 (FIILTISYEGLFYFAFCMTLV) traverse the membrane as a helical segment. The Cytoplasmic segment spans residues 706–761 (TWVRLEHATYVYTAKPVAKQAQETIEPPKKANPGATTVVDGETYRFRTLTVSDARV). The chain crosses the membrane as a helical span at residues 762–782 (ALFFFFLLQSAFFSTGNIASI). The Lumenal segment spans residues 783 to 803 (SSFSLDSVYRLIPVFNPFSQG). Residues 804 to 824 (ALLILKLLIPFAIISANLGIL) form a helical membrane-spanning segment. Topologically, residues 825–833 (NRRLEVAPS) are cytoplasmic. Residues 834–854 (ALFMVVMAISDVMTLNFFYMV) traverse the membrane as a helical segment. Residues 855–870 (RDEGSWLDIGTTISHF) lie on the Lumenal side of the membrane. Residues 871–891 (CIASFLCTFVAGLEFLSEVFI) form a helical membrane-spanning segment. The Cytoplasmic segment spans residues 892-930 (SGVDFGLRTDAITASVPDIVNGITSKGQKDVPNGVEDKE).

The protein belongs to the PIGG/PIGN/PIGO family. PIGN subfamily.

It localises to the endoplasmic reticulum membrane. Its pathway is glycolipid biosynthesis; glycosylphosphatidylinositol-anchor biosynthesis. Its function is as follows. Ethanolamine phosphate transferase involved in glycosylphosphatidylinositol-anchor biosynthesis. Transfers ethanolamine phosphate to the first alpha-1,4-linked mannose of the glycosylphosphatidylinositol precursor of GPI-anchor. The sequence is that of GPI ethanolamine phosphate transferase 1 (mcd4) from Emericella nidulans (strain FGSC A4 / ATCC 38163 / CBS 112.46 / NRRL 194 / M139) (Aspergillus nidulans).